Here is a 674-residue protein sequence, read N- to C-terminus: Glutaminase kidney isoform, mitochondrial (674 aa).

The transit peptide at 1-54 (MMRLRGSAMLRELLLRPPAAVGAVLRRAQPLGTLCRRPRGGSRPTAGLVAAARL) directs the protein to the mitochondrion. Residues 56 to 123 (PWWGGGGRAK…PGETDAFGNS (68 aa)) are disordered. Positions 58–71 (WGGGGRAKGPGAGG) are enriched in gly residues. The span at 89 to 101 (PPQQQQQQQQQPG) shows a compositional bias: low complexity. Lysine 135 and lysine 169 each carry N6-succinyllysine. Substrate is bound at residue serine 291. Lysine 316 is modified (N6-acetyllysine). The highly mobile activation loop stretch occupies residues 320–327 (GLRFNKLF). Residues asparagine 340, glutamate 386, asparagine 393, tyrosine 419, tyrosine 471, and valine 489 each coordinate substrate. ANK repeat units follow at residues 590-619 (DSRT…VNPF) and 624-653 (WNNT…QYTP). The segment at 652 to 674 (TPQGDSDDGKGNQTVHKNLDGLL) is disordered. Position 657 is a phosphoserine (serine 657).

Belongs to the glutaminase family. As to quaternary structure, homotetramer, dimer of dimers. The tetramers can assemble into rod-like oligomers (in vitro), but the physiological significance of this is not clear. Interacts with RAF1 and MAP2K2. Interacts with ATCAY; the interaction is direct and may control GLS localization, negatively regulating its activity. In terms of processing, synthesized as a 74-kDa cytosolic precursor which is proteolytically processed by the mitochondrial-processing peptidase (MPP) via a 72-kDa intermediate to yield the mature mitochondrial 68- and 65-kDa subunits.

The protein resides in the mitochondrion. It is found in the cytoplasm. Its subcellular location is the cytosol. It localises to the mitochondrion matrix. The enzyme catalyses L-glutamine + H2O = L-glutamate + NH4(+). Its activity is regulated as follows. Isoform 1 and isoform 2 are activated by phosphate, due to increased affinity for glutamine. At phosphate concentrations above 10 mM, isoform 2 is more efficient than isoform 1. Catalyzes the first reaction in the primary pathway for the renal catabolism of glutamine. Plays a role in maintaining acid-base homeostasis. Regulates the levels of the neurotransmitter glutamate, the main excitatory neurotransmitter in the brain. The chain is Glutaminase kidney isoform, mitochondrial (Gls) from Mus musculus (Mouse).